Reading from the N-terminus, the 623-residue chain is DNA-directed RNA polymerase subunit beta' (623 aa).

Positions 70, 72, 85, and 88 each coordinate Zn(2+). Positions 466, 468, and 470 each coordinate Mg(2+).

Belongs to the RNA polymerase beta' chain family. RpoC1 subfamily. In plastids the minimal PEP RNA polymerase catalytic core is composed of four subunits: alpha, beta, beta', and beta''. When a (nuclear-encoded) sigma factor is associated with the core the holoenzyme is formed, which can initiate transcription. Mg(2+) serves as cofactor. Requires Zn(2+) as cofactor.

Its subcellular location is the plastid. It is found in the chloroplast. The catalysed reaction is RNA(n) + a ribonucleoside 5'-triphosphate = RNA(n+1) + diphosphate. Functionally, DNA-dependent RNA polymerase catalyzes the transcription of DNA into RNA using the four ribonucleoside triphosphates as substrates. The sequence is that of DNA-directed RNA polymerase subunit beta' from Rhodomonas salina (Cryptomonas salina).